The following is a 384-amino-acid chain: Galactokinase (384 aa).

Residue E34–D37 participates in substrate binding. S123–S129 serves as a coordination point for ATP. Residues S129 and E161 each coordinate Mg(2+). The active-site Proton acceptor is D173. Y222 contacts substrate.

This sequence belongs to the GHMP kinase family. GalK subfamily.

The protein resides in the cytoplasm. The catalysed reaction is alpha-D-galactose + ATP = alpha-D-galactose 1-phosphate + ADP + H(+). It participates in carbohydrate metabolism; galactose metabolism. Functionally, catalyzes the transfer of the gamma-phosphate of ATP to D-galactose to form alpha-D-galactose-1-phosphate (Gal-1-P). This Haemophilus influenzae (strain ATCC 51907 / DSM 11121 / KW20 / Rd) protein is Galactokinase.